The primary structure comprises 226 residues: Octanoyltransferase (226 aa).

Residues 34–216 (GEANELVWLL…AWTEAFGPVR (183 aa)) form the BPL/LPL catalytic domain. Substrate contacts are provided by residues 73–80 (RGGEYTYH), 145–147 (AIG), and 158–160 (GIA). The active-site Acyl-thioester intermediate is C176.

This sequence belongs to the LipB family.

The protein resides in the cytoplasm. The enzyme catalyses octanoyl-[ACP] + L-lysyl-[protein] = N(6)-octanoyl-L-lysyl-[protein] + holo-[ACP] + H(+). It functions in the pathway protein modification; protein lipoylation via endogenous pathway; protein N(6)-(lipoyl)lysine from octanoyl-[acyl-carrier-protein]: step 1/2. Functionally, catalyzes the transfer of endogenously produced octanoic acid from octanoyl-acyl-carrier-protein onto the lipoyl domains of lipoate-dependent enzymes. Lipoyl-ACP can also act as a substrate although octanoyl-ACP is likely to be the physiological substrate. The sequence is that of Octanoyltransferase from Maricaulis maris (strain MCS10) (Caulobacter maris).